Consider the following 312-residue polypeptide: 2-phospho-L-lactate transferase (312 aa).

Residues Asp-50 and Lys-89 each contribute to the 7,8-didemethyl-8-hydroxy-5-deazariboflavin site.

It belongs to the CofD family. Homodimer. Requires Mg(2+) as cofactor.

It catalyses the reaction (2S)-lactyl-2-diphospho-5'-guanosine + 7,8-didemethyl-8-hydroxy-5-deazariboflavin = oxidized coenzyme F420-0 + GMP + H(+). It participates in cofactor biosynthesis; coenzyme F420 biosynthesis. In terms of biological role, catalyzes the transfer of the 2-phospholactate moiety from (2S)-lactyl-2-diphospho-5'-guanosine to 7,8-didemethyl-8-hydroxy-5-deazariboflavin (FO) with the formation of oxidized coenzyme F420-0 and GMP. This Methanococcus vannielii (strain ATCC 35089 / DSM 1224 / JCM 13029 / OCM 148 / SB) protein is 2-phospho-L-lactate transferase.